The following is a 495-amino-acid chain: UDP-glycosyltransferase 73C10 (495 aa).

Histidine 24 serves as the catalytic Proton acceptor. Residue histidine 24 participates in an anthocyanidin binding. The Charge relay role is filled by aspartate 129. Glutamine 358, histidine 373, tryptophan 376, asparagine 377, serine 378, and glutamate 381 together coordinate UDP-alpha-D-glucose. Glycine 396 contacts an anthocyanidin. Positions 397 and 398 each coordinate UDP-alpha-D-glucose.

The protein belongs to the UDP-glycosyltransferase family.

The catalysed reaction is oleanolate + UDP-alpha-D-glucose = oleanolate 3-O-beta-D-glucoside + UDP + H(+). Catalyzes the transfer of a glucose (Glc) moiety from UDP-Glc to the C-3 position of the oleanane sapogenins oleanolate and hederagenin, and to the C-28 carboxylic group of the lupane sapogenin betulinate. The monoglucosylated hederagenin 3-O-beta-D-glucoside is a feeding deterrent of the yellow-striped flea beetle (Phyllotreta nemorum). This Barbarea vulgaris (Yellow rocket) protein is UDP-glycosyltransferase 73C10.